The sequence spans 402 residues: Putative F-box protein At1g70970 (402 aa).

The F-box domain maps to 4-52; that stretch reads SSSETLHVEDLQTEIMSWLPLKSLLRFVIVSKKWASIIRGEQFKALYLR.

The chain is Putative F-box protein At1g70970 from Arabidopsis thaliana (Mouse-ear cress).